The primary structure comprises 660 residues: uncharacterized protein (660 aa).

The segment at 220–239 is disordered; that stretch reads ADARGQAAAPPQAQAPAPPD. A compositionally biased stretch (low complexity) spans 222-239; sequence ARGQAAAPPQAQAPAPPD.

This is an uncharacterized protein from Callospermophilus lateralis (Golden-mantled ground squirrel).